A 415-amino-acid polypeptide reads, in one-letter code: Multifunctional CCA protein (415 aa).

2 residues coordinate ATP: Gly8 and Arg11. CTP is bound by residues Gly8 and Arg11. Mg(2+) is bound by residues Asp21 and Asp23. ATP contacts are provided by Arg91, Arg143, and Arg146. CTP is bound by residues Arg91, Arg143, and Arg146. The HD domain occupies 232–333; that stretch reads TGVHVMMVID…TRLLERCDAL (102 aa).

Belongs to the tRNA nucleotidyltransferase/poly(A) polymerase family. Bacterial CCA-adding enzyme type 1 subfamily. Monomer. Can also form homodimers and oligomers. Mg(2+) is required as a cofactor. Ni(2+) serves as cofactor.

The enzyme catalyses a tRNA precursor + 2 CTP + ATP = a tRNA with a 3' CCA end + 3 diphosphate. It carries out the reaction a tRNA with a 3' CCA end + 2 CTP + ATP = a tRNA with a 3' CCACCA end + 3 diphosphate. Its function is as follows. Catalyzes the addition and repair of the essential 3'-terminal CCA sequence in tRNAs without using a nucleic acid template. Adds these three nucleotides in the order of C, C, and A to the tRNA nucleotide-73, using CTP and ATP as substrates and producing inorganic pyrophosphate. tRNA 3'-terminal CCA addition is required both for tRNA processing and repair. Also involved in tRNA surveillance by mediating tandem CCA addition to generate a CCACCA at the 3' terminus of unstable tRNAs. While stable tRNAs receive only 3'-terminal CCA, unstable tRNAs are marked with CCACCA and rapidly degraded. In Cupriavidus pinatubonensis (strain JMP 134 / LMG 1197) (Cupriavidus necator (strain JMP 134)), this protein is Multifunctional CCA protein.